The following is an 82-amino-acid chain: Opistoporin-1 (82 aa).

Positions 1 to 22 are cleaved as a signal peptide; that stretch reads MNRKLLFVTLMVTMLVMQPSEG. Residues 67–82 constitute a propeptide that is removed on maturation; the sequence is EAGQMPFDEFMDILYE.

In terms of tissue distribution, expressed by the venom gland.

It is found in the secreted. The protein localises to the target cell membrane. At high concentrations, acts as a pore former in cellular membranes and causes the leakage of the cells. At submicromolar concentrations, degranulates granulocytes and has a weak hemolytic activity against human erythrocytes. Also strongly inhibits the production of superoxide anions. Has a strong antibacterial activity against Gram-negative bacteria but is less active against Gram-positive bacteria. Also has antifungal activity. The chain is Opistoporin-1 from Opistophthalmus carinatus (African yellow leg scorpion).